The sequence spans 331 residues: MTPPLLALEEHYYSTAIFNSIGETFQRTLQGVPGLADQLRSLGDGRLEAMNRGNISLQVVSHAFTPGGPSAEACRAGNDELAAEIAQISDPQRFAAFAVLPVADPTASAAELDRSVSELGFVGALIDNHADGKHFDGHDYDVLWAKACELDVPIYLHPTWPSARMAENFMGSYPVPVGISLGGPGWGWHPDVGLHVLKLFAAGVFDRFPRLKIIVGHMGEMLPYMLERASDMSTRWGGWGPRDRPLRQVWDENIWITTSGSWSLAPLKCILHNTKVERIMYSVDYPFESNERGLEWFKELEGSGLLTEEQLEMVAYRNAEDLLKVHMKKEQ.

Zn(2+)-binding residues include H11, H157, and D284.

Belongs to the metallo-dependent hydrolases superfamily. ACMSD family.

Its pathway is secondary metabolite biosynthesis. Its function is as follows. Decarboxylase; part of the gene cluster that mediates the biosynthesis of orsellinic acid, as well as of the cathepsin K inhibitors F9775 A and F9775 B. The non-reducing polyketide synthase orsA produces orsellinic acid by condensing acetyl-CoA with 3 malonyl-CoA units. Further modifications by the decarboxylase orsB and the tyrosinase-like protein orsC lead to the production of F9775 A and F9775 B. The functions of orsD and orsE remain unclear since only orsB and orsC are required to convert orsellinic acid into F9775 A and F9775 B. The sequence is that of Decarboxylase orsB from Emericella nidulans (strain FGSC A4 / ATCC 38163 / CBS 112.46 / NRRL 194 / M139) (Aspergillus nidulans).